Reading from the N-terminus, the 245-residue chain is 14-3-3 protein theta (245 aa).

It belongs to the 14-3-3 family. Homodimer, and heterodimer with other family members.

Its subcellular location is the cytoplasm. In terms of biological role, adapter protein implicated in the regulation of a large spectrum of both general and specialized signaling pathways. Binds to a large number of partners, usually by recognition of a phosphoserine or phosphothreonine motif. Binding generally results in the modulation of the activity of the binding partner. This chain is 14-3-3 protein theta (YWHAQ), found in Gallus gallus (Chicken).